The following is a 209-amino-acid chain: 7-carboxy-7-deazaguanine synthase (209 aa).

Substrate is bound by residues 10 to 12 (IQG) and Arg-25. A Radical SAM core domain is found at 16–205 (YAGLPMLFVR…PQIHKIIYGD (190 aa)). The [4Fe-4S] cluster site is built by Cys-29, Cys-33, and Cys-36. Residue Thr-38 coordinates Mg(2+). Substrate is bound at residue Thr-68. Gly-70 contributes to the S-adenosyl-L-methionine binding site.

Belongs to the radical SAM superfamily. 7-carboxy-7-deazaguanine synthase family. Homodimer. [4Fe-4S] cluster is required as a cofactor. Requires S-adenosyl-L-methionine as cofactor. Mg(2+) serves as cofactor.

It carries out the reaction 6-carboxy-5,6,7,8-tetrahydropterin + H(+) = 7-carboxy-7-deazaguanine + NH4(+). It functions in the pathway purine metabolism; 7-cyano-7-deazaguanine biosynthesis. Catalyzes the complex heterocyclic radical-mediated conversion of 6-carboxy-5,6,7,8-tetrahydropterin (CPH4) to 7-carboxy-7-deazaguanine (CDG), a step common to the biosynthetic pathways of all 7-deazapurine-containing compounds. This chain is 7-carboxy-7-deazaguanine synthase, found in Thermoplasma acidophilum (strain ATCC 25905 / DSM 1728 / JCM 9062 / NBRC 15155 / AMRC-C165).